The following is a 360-amino-acid chain: Serine/threonine-protein kinase SRK2H (360 aa).

A Protein kinase domain is found at 4-260 (YEVVKDLGAG…LKEIKKHPWY (257 aa)). Residues 10-18 (LGAGNFGVA) and Lys-33 each bind ATP. Asp-123 serves as the catalytic Proton acceptor. Positions 298–360 (EARNPAPSSN…AHSCQEPPKA (63 aa)) are disordered. The span at 313 to 343 (DDDEEDVEDEVEEEEEEEEEEEEEEEEEEDE) shows a compositional bias: acidic residues. Basic and acidic residues predominate over residues 344–360 (YEKHVKEAHSCQEPPKA).

It belongs to the protein kinase superfamily. Ser/Thr protein kinase family. In terms of tissue distribution, expressed in seedlings.

It catalyses the reaction L-seryl-[protein] + ATP = O-phospho-L-seryl-[protein] + ADP + H(+). The enzyme catalyses L-threonyl-[protein] + ATP = O-phospho-L-threonyl-[protein] + ADP + H(+). This Arabidopsis thaliana (Mouse-ear cress) protein is Serine/threonine-protein kinase SRK2H (SRK2H).